Consider the following 153-residue polypeptide: Deoxyuridine 5'-triphosphate nucleotidohydrolase (153 aa).

Residues 71 to 73, Asn84, 88 to 90, and Met98 each bind substrate; these read RSG and LID.

This sequence belongs to the dUTPase family. Requires Mg(2+) as cofactor.

The enzyme catalyses dUTP + H2O = dUMP + diphosphate + H(+). It participates in pyrimidine metabolism; dUMP biosynthesis; dUMP from dCTP (dUTP route): step 2/2. This enzyme is involved in nucleotide metabolism: it produces dUMP, the immediate precursor of thymidine nucleotides and it decreases the intracellular concentration of dUTP so that uracil cannot be incorporated into DNA. The polypeptide is Deoxyuridine 5'-triphosphate nucleotidohydrolase (Hydrogenovibrio crunogenus (strain DSM 25203 / XCL-2) (Thiomicrospira crunogena)).